The chain runs to 320 residues: Probable arabinan endo-1,5-alpha-L-arabinosidase C (320 aa).

Residues 1-16 (MYRSTLLFLFIALVNA) form the signal peptide. Aspartate 31 acts as the Proton acceptor in catalysis. N-linked (GlcNAc...) asparagine glycans are attached at residues asparagine 73, asparagine 137, and asparagine 191. The active-site Proton donor is glutamate 199.

It belongs to the glycosyl hydrolase 43 family.

It localises to the secreted. It carries out the reaction Endohydrolysis of (1-&gt;5)-alpha-arabinofuranosidic linkages in (1-&gt;5)-arabinans.. It functions in the pathway glycan metabolism; L-arabinan degradation. Its function is as follows. Endo-1,5-alpha-L-arabinanase involved in degradation of pectin. Its preferred substrate is linear 1,5-alpha-L-arabinan. The polypeptide is Probable arabinan endo-1,5-alpha-L-arabinosidase C (abnC) (Aspergillus terreus (strain NIH 2624 / FGSC A1156)).